The chain runs to 419 residues: RING finger protein 150 (419 aa).

The N-terminal stretch at methionine 1–alanine 34 is a signal peptide. At glutamate 35 to serine 197 the chain is on the extracellular side. The region spanning serine 70–methionine 172 is the PA domain. A helical transmembrane segment spans residues valine 198–phenylalanine 218. At tyrosine 219–cysteine 419 the chain is on the cytoplasmic side. The segment at cysteine 267–lysine 308 adopts an RING-type; atypical zinc-finger fold. The interval serine 374 to cysteine 419 is disordered. Polar residues predominate over residues proline 376–alanine 405.

It localises to the membrane. The protein is RING finger protein 150 (rnf150) of Danio rerio (Zebrafish).